The chain runs to 326 residues: tRNA-modifying protein YgfZ (326 aa).

The folate site is built by Trp27 and Trp189.

Belongs to the tRNA-modifying YgfZ family.

It is found in the cytoplasm. In terms of biological role, folate-binding protein involved in regulating the level of ATP-DnaA and in the modification of some tRNAs. It is probably a key factor in regulatory networks that act via tRNA modification, such as initiation of chromosomal replication. This Salmonella schwarzengrund (strain CVM19633) protein is tRNA-modifying protein YgfZ.